A 430-amino-acid polypeptide reads, in one-letter code: RPM1 interacting protein 13 (430 aa).

Residues 1 to 21 (MGSGNHVDIVDVSSGEEDVDT) are disordered. The interval 231-300 (RHRIRQPIPH…QVSQSSHHSS (70 aa)) is nuclear localization.

As to quaternary structure, interacts with RPM1 (via its NB-ARC domain). Binds to ARF1 in the nucleus.

The protein localises to the nucleus. In terms of biological role, resistance protein interactor which positively enhances RPM1-mediated resistance to necrotrophic bacterial pathogens Pseudomonas syringae pv. tomato DC3000 harboring type III effector protein AvrRpm1 or AvrB, but prevents the hypersensitive response (HR) controlled by RPM1. Together with ARF1, promotes leaf senescence and cell death, probably by facilitating the translocation of ARF1 into the nucleus, and activates ROS-related enzymes (e.g. POD, CAT and SOD). The protein is RPM1 interacting protein 13 of Arabidopsis thaliana (Mouse-ear cress).